A 292-amino-acid polypeptide reads, in one-letter code: Malonyl-[acyl-carrier protein] O-methyltransferase (292 aa).

The protein belongs to the methyltransferase superfamily.

The catalysed reaction is malonyl-[ACP] + S-adenosyl-L-methionine = malonyl-[ACP] methyl ester + S-adenosyl-L-homocysteine. Its pathway is cofactor biosynthesis; biotin biosynthesis. Functionally, converts the free carboxyl group of a malonyl-thioester to its methyl ester by transfer of a methyl group from S-adenosyl-L-methionine (SAM). It allows to synthesize pimeloyl-ACP via the fatty acid synthetic pathway. The chain is Malonyl-[acyl-carrier protein] O-methyltransferase from Alcanivorax borkumensis (strain ATCC 700651 / DSM 11573 / NCIMB 13689 / SK2).